Consider the following 115-residue polypeptide: Ribonuclease P protein component (115 aa).

Belongs to the RnpA family. Consists of a catalytic RNA component (M1 or rnpB) and a protein subunit.

The catalysed reaction is Endonucleolytic cleavage of RNA, removing 5'-extranucleotides from tRNA precursor.. Its function is as follows. RNaseP catalyzes the removal of the 5'-leader sequence from pre-tRNA to produce the mature 5'-terminus. It can also cleave other RNA substrates such as 4.5S RNA. The protein component plays an auxiliary but essential role in vivo by binding to the 5'-leader sequence and broadening the substrate specificity of the ribozyme. The polypeptide is Ribonuclease P protein component (Baumannia cicadellinicola subsp. Homalodisca coagulata).